The following is a 227-amino-acid chain: Phosphoribosylformylglycinamidine synthase subunit PurQ (227 aa).

The region spanning 3 to 227 (SSVITFPGSN…FFQNLINNLK (225 aa)) is the Glutamine amidotransferase type-1 domain. Catalysis depends on Cys-85, which acts as the Nucleophile. Residues His-201 and Glu-203 contribute to the active site.

In terms of assembly, part of the FGAM synthase complex composed of 1 PurL, 1 PurQ and 2 PurS subunits.

The protein localises to the cytoplasm. It catalyses the reaction N(2)-formyl-N(1)-(5-phospho-beta-D-ribosyl)glycinamide + L-glutamine + ATP + H2O = 2-formamido-N(1)-(5-O-phospho-beta-D-ribosyl)acetamidine + L-glutamate + ADP + phosphate + H(+). The catalysed reaction is L-glutamine + H2O = L-glutamate + NH4(+). Its pathway is purine metabolism; IMP biosynthesis via de novo pathway; 5-amino-1-(5-phospho-D-ribosyl)imidazole from N(2)-formyl-N(1)-(5-phospho-D-ribosyl)glycinamide: step 1/2. Its function is as follows. Part of the phosphoribosylformylglycinamidine synthase complex involved in the purines biosynthetic pathway. Catalyzes the ATP-dependent conversion of formylglycinamide ribonucleotide (FGAR) and glutamine to yield formylglycinamidine ribonucleotide (FGAM) and glutamate. The FGAM synthase complex is composed of three subunits. PurQ produces an ammonia molecule by converting glutamine to glutamate. PurL transfers the ammonia molecule to FGAR to form FGAM in an ATP-dependent manner. PurS interacts with PurQ and PurL and is thought to assist in the transfer of the ammonia molecule from PurQ to PurL. The polypeptide is Phosphoribosylformylglycinamidine synthase subunit PurQ (Pelagibacter ubique (strain HTCC1062)).